Consider the following 891-residue polypeptide: DNA mismatch repair protein MutS (891 aa).

Residue 646–653 (GPNMAGKS) participates in ATP binding.

Belongs to the DNA mismatch repair MutS family.

Its function is as follows. This protein is involved in the repair of mismatches in DNA. It is possible that it carries out the mismatch recognition step. This protein has a weak ATPase activity. This is DNA mismatch repair protein MutS from Rickettsia canadensis (strain McKiel).